An 89-amino-acid chain; its full sequence is Small ribosomal subunit protein uS15 (89 aa).

Belongs to the universal ribosomal protein uS15 family. In terms of assembly, part of the 30S ribosomal subunit. Forms a bridge to the 50S subunit in the 70S ribosome, contacting the 23S rRNA.

Functionally, one of the primary rRNA binding proteins, it binds directly to 16S rRNA where it helps nucleate assembly of the platform of the 30S subunit by binding and bridging several RNA helices of the 16S rRNA. Its function is as follows. Forms an intersubunit bridge (bridge B4) with the 23S rRNA of the 50S subunit in the ribosome. The sequence is that of Small ribosomal subunit protein uS15 from Saccharophagus degradans (strain 2-40 / ATCC 43961 / DSM 17024).